Consider the following 217-residue polypeptide: uncharacterized protein (217 aa).

A disordered region spans residues 1-32 (MTLKKHRGKMSEKSNVNKKFTNSTQNNSNWSN). Residues 22–32 (NSTQNNSNWSN) are compositionally biased toward low complexity.

This is an uncharacterized protein from Acidianus filamentous virus 2 (isolate Italy/Pozzuoli) (AFV-2).